A 380-amino-acid polypeptide reads, in one-letter code: Flap endonuclease 1-A (380 aa).

Residues 1–105 (MGIKGLTKLL…QELAKRYSKR (105 aa)) are N-domain. Aspartate 34 serves as a coordination point for Mg(2+). Arginine 71 lines the DNA pocket. Positions 87, 159, 161, 180, and 182 each coordinate Mg(2+). Residues 123 to 254 (AIEKFSKRTV…QTALKLIRQH (132 aa)) are I-domain. Glutamate 159 serves as a coordination point for DNA. DNA contacts are provided by glycine 232 and aspartate 234. Aspartate 234 serves as a coordination point for Mg(2+). Positions 336 to 344 (SQGRLESFF) are interaction with PCNA. The disordered stretch occupies residues 351-380 (SVPLKRKDTSEKPTKAVANKKTKGAGGKKK). The span at 355–364 (KRKDTSEKPT) shows a compositional bias: basic and acidic residues. Residues 368-380 (ANKKTKGAGGKKK) are compositionally biased toward basic residues.

Belongs to the XPG/RAD2 endonuclease family. FEN1 subfamily. In terms of assembly, interacts with PCNA. Three molecules of FEN1 bind to one PCNA trimer with each molecule binding to one PCNA monomer. PCNA stimulates the nuclease activity without altering cleavage specificity. The cofactor is Mg(2+). In terms of processing, phosphorylated. Phosphorylation upon DNA damage induces relocalization to the nuclear plasma. Strongly expressed in proliferating tissues: root and shoot apical meristem, tiller bud, leaf, ligule primordia, marginal meristem of young leaves and panicles. Not expressed in mature leaves when exposed to UV.

It is found in the nucleus. Its subcellular location is the nucleolus. The protein localises to the nucleoplasm. It localises to the mitochondrion. Inhibited by NaCl. Functionally, structure-specific nuclease with 5'-flap endonuclease and 5'-3' exonuclease activities involved in DNA replication and repair. During DNA replication, cleaves the 5'-overhanging flap structure that is generated by displacement synthesis when DNA polymerase encounters the 5'-end of a downstream Okazaki fragment. It enters the flap from the 5'-end and then tracks to cleave the flap base, leaving a nick for ligation. Also involved in the long patch base excision repair (LP-BER) pathway, by cleaving within the apurinic/apyrimidinic (AP) site-terminated flap. Acts as a genome stabilization factor that prevents flaps from equilibrating into structures that lead to duplications and deletions. Also possesses 5'-3' exonuclease activity on nicked or gapped double-stranded DNA, and exhibits RNase H activity. Also involved in replication and repair of rDNA and in repairing mitochondrial DNA. May be required for cell proliferation. The protein is Flap endonuclease 1-A of Oryza sativa subsp. japonica (Rice).